A 212-amino-acid chain; its full sequence is 3-demethoxyubiquinol 3-hydroxylase (212 aa).

Residues glutamate 61, glutamate 91, histidine 94, glutamate 143, glutamate 175, and histidine 178 each contribute to the Fe cation site.

The protein belongs to the COQ7 family. The cofactor is Fe cation.

The protein resides in the cell membrane. The catalysed reaction is a 5-methoxy-2-methyl-3-(all-trans-polyprenyl)benzene-1,4-diol + AH2 + O2 = a 3-demethylubiquinol + A + H2O. It functions in the pathway cofactor biosynthesis; ubiquinone biosynthesis. Functionally, catalyzes the hydroxylation of 2-nonaprenyl-3-methyl-6-methoxy-1,4-benzoquinol during ubiquinone biosynthesis. This is 3-demethoxyubiquinol 3-hydroxylase from Methylibium petroleiphilum (strain ATCC BAA-1232 / LMG 22953 / PM1).